Consider the following 605-residue polypeptide: Probable Xaa-Pro aminopeptidase P (605 aa).

Residues aspartate 402, aspartate 413, glutamate 511, and glutamate 525 each coordinate Mn(2+).

The protein belongs to the peptidase M24B family. Mn(2+) is required as a cofactor.

The enzyme catalyses Release of any N-terminal amino acid, including proline, that is linked to proline, even from a dipeptide or tripeptide.. Catalyzes the removal of a penultimate prolyl residue from the N-termini of peptides. The sequence is that of Probable Xaa-Pro aminopeptidase P (AMPP) from Leptosphaeria maculans (strain JN3 / isolate v23.1.3 / race Av1-4-5-6-7-8) (Blackleg fungus).